The chain runs to 210 residues: NADH dehydrogenase [ubiquinone] iron-sulfur protein 8, mitochondrial (210 aa).

The transit peptide at Met-1–Ala-34 directs the protein to the mitochondrion. 4Fe-4S ferredoxin-type domains are found at residues Arg-102 to Glu-131 and Thr-141 to Asn-170. Residues Cys-111, Cys-114, Cys-117, Cys-121, Cys-150, Cys-153, Cys-156, and Cys-160 each contribute to the [4Fe-4S] cluster site.

Belongs to the complex I 23 kDa subunit family. In terms of assembly, core subunit of respiratory chain NADH dehydrogenase (Complex I) which is composed of 45 different subunits. This is a component of the iron-sulfur (IP) fragment of the enzyme. Interacts with RAB5IF. [4Fe-4S] cluster is required as a cofactor.

The protein localises to the mitochondrion inner membrane. The enzyme catalyses a ubiquinone + NADH + 5 H(+)(in) = a ubiquinol + NAD(+) + 4 H(+)(out). Its function is as follows. Core subunit of the mitochondrial membrane respiratory chain NADH dehydrogenase (Complex I) which catalyzes electron transfer from NADH through the respiratory chain, using ubiquinone as an electron acceptor. Essential for the catalytic activity and assembly of complex I. This chain is NADH dehydrogenase [ubiquinone] iron-sulfur protein 8, mitochondrial (NDUFS8), found in Gorilla gorilla gorilla (Western lowland gorilla).